A 278-amino-acid polypeptide reads, in one-letter code: Single-strand selective monofunctional uracil-DNA glycosylase (278 aa).

The substrate site is built by methionine 84, phenylalanine 98, and asparagine 163. Residues 173 to 187 (SGRNLTPADLPAKHR) are DNA-binding. Histidine 239 lines the substrate pocket.

It belongs to the uracil-DNA glycosylase (UDG) superfamily. SMUG1 family.

The protein localises to the nucleus. In terms of biological role, recognizes base lesions in the genome and initiates base excision DNA repair. Acts as a monofunctional DNA glycosylase specific for uracil (U) residues in DNA with a preference for single-stranded DNA substrates. The activity is greater toward mismatches (U/G) compared to matches (U/A). Excises uracil (U), 5-formyluracil (fU) and uracil derivatives bearing an oxidized group at C5 [5-hydroxyuracil (hoU) and 5-hydroxymethyluracil (hmU)] in ssDNA and dsDNA, but not analogous cytosine derivatives (5-hydroxycytosine and 5-formylcytosine), nor other oxidized bases. The activity is damage-specific and salt-dependent. The substrate preference is the following: ssDNA &gt; dsDNA (G pair) = dsDNA (A pair) at low salt concentration, and dsDNA (G pair) &gt; dsDNA (A pair) &gt; ssDNA at high salt concentration. The polypeptide is Single-strand selective monofunctional uracil-DNA glycosylase (Smug1) (Rattus norvegicus (Rat)).